Here is a 184-residue protein sequence, read N- to C-terminus: Large ribosomal subunit protein bL9 (184 aa).

The segment at 156 to 184 (RQAKLQNQKSEQQEAEQDASKEAADADDS) is disordered. Residues 173-184 (DASKEAADADDS) show a composition bias toward basic and acidic residues.

It belongs to the bacterial ribosomal protein bL9 family.

Functionally, binds to the 23S rRNA. The sequence is that of Large ribosomal subunit protein bL9 from Wolbachia pipientis subsp. Culex pipiens (strain wPip).